We begin with the raw amino-acid sequence, 598 residues long: MDKINIRNFAIIAHIDHGKSTLADRLIEECNGLEKREMKDQVLDSMDIERERGITIKAQTVRLMYTAKDGKVYYLNLMDTPGHVDFSYEVSRSLAACEGSLLVVDSTQGVEAQTLANVYKAIDSNHEIIPVLNKIDLASSDPDKVKSQIEEIIGIDASESLLVSAKSGIGIKDVLEAIVSRLPAPSGNFDNPLKAILVDTWYDTYLGIVILLRVVDGVIKKGMKIVMMSSNAVYQVDNIGIFTPHKKIVDQLSVGEIGFITASIKELSDCKIGDTITEEQRRCDNPMPGFRTIHPVVFCSIFPNEAGDFERLREALKKLQLNDASFTFDIEVSNALGYGFRCGFLGMLHLEVIQERLEREFNLDLTATAPGVVYQIISKNGILREVHNPHDFGDVQDIASIKEPWICATIMVPDQYLGVVMSLCNNKRGEKVDLSYSGNTALLKYRLPLSEVVFDFYDRIKSISKGYASLDWEMDGYMDSEIAKLTILINSEPVDALACIVHKSKVEQRGREICLRLKDLIPRQQYKIAIQAAVGSKIIARETISPYRKDVTAKLYGGDVTRRMKLLEKQKKGKKRLRAIGNVNVPHNAFIQALKIID.

A tr-type G domain is found at 4-186 (INIRNFAIIA…AIVSRLPAPS (183 aa)). GTP-binding positions include 16–21 (DHGKST) and 133–136 (NKID).

This sequence belongs to the TRAFAC class translation factor GTPase superfamily. Classic translation factor GTPase family. LepA subfamily.

It is found in the cell inner membrane. It carries out the reaction GTP + H2O = GDP + phosphate + H(+). Required for accurate and efficient protein synthesis under certain stress conditions. May act as a fidelity factor of the translation reaction, by catalyzing a one-codon backward translocation of tRNAs on improperly translocated ribosomes. Back-translocation proceeds from a post-translocation (POST) complex to a pre-translocation (PRE) complex, thus giving elongation factor G a second chance to translocate the tRNAs correctly. Binds to ribosomes in a GTP-dependent manner. The chain is Elongation factor 4 from Ehrlichia ruminantium (strain Welgevonden).